Here is a 75-residue protein sequence, read N- to C-terminus: Translational regulator CsrA (75 aa).

This sequence belongs to the CsrA/RsmA family. In terms of assembly, homodimer; the beta-strands of each monomer intercalate to form a hydrophobic core, while the alpha-helices form wings that extend away from the core.

It is found in the cytoplasm. Its function is as follows. A translational regulator that binds mRNA to regulate translation initiation and/or mRNA stability. Usually binds in the 5'-UTR at or near the Shine-Dalgarno sequence preventing ribosome-binding, thus repressing translation. Its main target seems to be the major flagellin gene, while its function is anatagonized by FliW. The sequence is that of Translational regulator CsrA from Thermosipho melanesiensis (strain DSM 12029 / CIP 104789 / BI429).